A 160-amino-acid polypeptide reads, in one-letter code: CXXC motif containing zinc binding protein (160 aa).

4 residues coordinate Zn(2+): Cys-33, Cys-36, Cys-67, and Cys-70. Ser-75 bears the Phosphoserine mark.

Belongs to the UPF0587 family. As to quaternary structure, monomer.

The polypeptide is CXXC motif containing zinc binding protein (Homo sapiens (Human)).